A 385-amino-acid chain; its full sequence is UDP-N-acetylglucosamine--N-acetylmuramyl-(pentapeptide) pyrophosphoryl-undecaprenol N-acetylglucosamine transferase (385 aa).

Residues 11-13 (TGG), Asn117, Arg160, Ser215, and Gln317 contribute to the UDP-N-acetyl-alpha-D-glucosamine site.

It belongs to the glycosyltransferase 28 family. MurG subfamily.

It is found in the cell inner membrane. It catalyses the reaction di-trans,octa-cis-undecaprenyl diphospho-N-acetyl-alpha-D-muramoyl-L-alanyl-D-glutamyl-meso-2,6-diaminopimeloyl-D-alanyl-D-alanine + UDP-N-acetyl-alpha-D-glucosamine = di-trans,octa-cis-undecaprenyl diphospho-[N-acetyl-alpha-D-glucosaminyl-(1-&gt;4)]-N-acetyl-alpha-D-muramoyl-L-alanyl-D-glutamyl-meso-2,6-diaminopimeloyl-D-alanyl-D-alanine + UDP + H(+). It functions in the pathway cell wall biogenesis; peptidoglycan biosynthesis. Functionally, cell wall formation. Catalyzes the transfer of a GlcNAc subunit on undecaprenyl-pyrophosphoryl-MurNAc-pentapeptide (lipid intermediate I) to form undecaprenyl-pyrophosphoryl-MurNAc-(pentapeptide)GlcNAc (lipid intermediate II). This Rickettsia prowazekii (strain Madrid E) protein is UDP-N-acetylglucosamine--N-acetylmuramyl-(pentapeptide) pyrophosphoryl-undecaprenol N-acetylglucosamine transferase.